A 307-amino-acid polypeptide reads, in one-letter code: MATINMTPGDLELGRDRGRIGKPIEIPLLENFGFDSQLGPFYLGFWNAVAYITGGIFTFIWLMVMFAQVNYNPVAFAKYFVVLQIDPPSSRYGLSFPPLNEGGWWLIATFFLTVSIFAWYMHIYTRAKALGIKPYLAYGFTGAIALYLVIYIIRPVWMGDWSEAPAHGIKALLDWTNNVSVRYGNFYYNPFHMLSIFFLLGSTLLLAMHAGTIWALEKYAAHEEWNEIQAPGTGTERAQLFWRWCMGFNANAYSIHLWAFWFAWLCGITGALGVFFSMPDFVNNWFQWGIEAGINYPQGPTPPVSLP.

Blocked amino end (Ala) is present on alanine 2. The next 3 helical transmembrane spans lie at 45–69, 103–123, and 133–153; these read FWNA…FAQV, GWWL…YMHI, and KPYL…IYII. Histidine 192 is a binding site for (7R,8Z)-bacteriochlorophyll b. Residues 196–216 traverse the membrane as a helical segment; it reads IFFLLGSTLLLAMHAGTIWAL. Residues histidine 209, glutamate 236, and histidine 256 each contribute to the Fe cation site. A helical transmembrane segment spans residues 257–277; it reads LWAFWFAWLCGITGALGVFFS.

It belongs to the reaction center PufL/M/PsbA/D family. Reaction center is composed of four bacteriochlorophylls, two bacteriopheophytins, two ubiquinones, one iron, and two highly hydrophobic polypeptide chains (designated L and M).

The protein resides in the cell membrane. The reaction center is a membrane-bound complex that mediates the initial photochemical event in the electron transfer process of photosynthesis. In Chloroflexus aurantiacus (strain ATCC 29366 / DSM 635 / J-10-fl), this protein is Reaction center protein M chain (pufM).